The primary structure comprises 321 residues: Glycerol-3-phosphate dehydrogenase [NAD(P)+] (321 aa).

6 residues coordinate NADPH: Ser-10, Trp-11, Arg-31, Arg-32, Tyr-47, and Lys-98. Sn-glycerol 3-phosphate is bound by residues Lys-98, Gly-125, and Ser-127. Ala-129 is an NADPH binding site. Sn-glycerol 3-phosphate contacts are provided by Lys-177, Asp-230, Ser-240, Arg-241, and Asn-242. The Proton acceptor role is filled by Lys-177. Arg-241 is an NADPH binding site. NADPH is bound by residues Val-265 and Glu-267.

Belongs to the NAD-dependent glycerol-3-phosphate dehydrogenase family.

The protein resides in the cytoplasm. It carries out the reaction sn-glycerol 3-phosphate + NAD(+) = dihydroxyacetone phosphate + NADH + H(+). It catalyses the reaction sn-glycerol 3-phosphate + NADP(+) = dihydroxyacetone phosphate + NADPH + H(+). It functions in the pathway membrane lipid metabolism; glycerophospholipid metabolism. Its function is as follows. Catalyzes the reduction of the glycolytic intermediate dihydroxyacetone phosphate (DHAP) to sn-glycerol 3-phosphate (G3P), the key precursor for phospholipid synthesis. The protein is Glycerol-3-phosphate dehydrogenase [NAD(P)+] of Thermotoga sp. (strain RQ2).